A 217-amino-acid polypeptide reads, in one-letter code: Peroxiredoxin (217 aa).

The 158-residue stretch at 2–159 (VVIGEKFPEV…VVRLVKALQT (158 aa)) folds into the Thioredoxin domain. Cys-46 acts as the Cysteine sulfenic acid (-SOH) intermediate in catalysis. Substrate is bound at residue Arg-122.

This sequence belongs to the peroxiredoxin family. Prx6 subfamily. As to quaternary structure, homodecamer. Pentamer of dimers that assemble into a ring structure.

It localises to the cytoplasm. The catalysed reaction is a hydroperoxide + [thioredoxin]-dithiol = an alcohol + [thioredoxin]-disulfide + H2O. Thiol-specific peroxidase that catalyzes the reduction of hydrogen peroxide and organic hydroperoxides to water and alcohols, respectively. Plays a role in cell protection against oxidative stress by detoxifying peroxides. This Methanococcus maripaludis (strain C5 / ATCC BAA-1333) protein is Peroxiredoxin.